A 574-amino-acid polypeptide reads, in one-letter code: ATP-dependent RNA helicase RhlB (574 aa).

The short motif at 9–37 is the Q motif element; it reads VTFSSFDLHPALVAGLESAGFTRCTPIQA. A Helicase ATP-binding domain is found at 40 to 220; it reads LPVALPGGDV…YEHMNEPEKL (181 aa). 53–60 lines the ATP pocket; sequence AQTGTGKT. Positions 166–169 match the DEAD box motif; sequence DEAD. In terms of domain architecture, Helicase C-terminal spans 231–393; it reads RVRQRIYFPS…PVTSELLTPL (163 aa). Residues 423-432 show a composition bias toward basic and acidic residues; it reads EQRAAEEQRR. The segment at 423 to 574 is disordered; sequence EQRAAEEQRR…RRLRSLVSGN (152 aa). Positions 435–449 are enriched in gly residues; that stretch reads GRSGPGGGSRSGSGG. The segment covering 477–495 has biased composition (low complexity); that stretch reads AAAAQTEKPVVAAAAAQAP. Over residues 506–515 the composition is skewed to basic residues; that stretch reads PRKRRRRRNG. Composition is skewed to low complexity over residues 523-535 and 553-562; these read PAVASTPIAAPAA and SSGSPSLLGR.

The protein belongs to the DEAD box helicase family. RhlB subfamily. As to quaternary structure, component of the RNA degradosome, which is a multiprotein complex involved in RNA processing and mRNA degradation.

The protein resides in the cytoplasm. The catalysed reaction is ATP + H2O = ADP + phosphate + H(+). Its function is as follows. DEAD-box RNA helicase involved in RNA degradation. Has RNA-dependent ATPase activity and unwinds double-stranded RNA. This Xanthomonas oryzae pv. oryzae (strain KACC10331 / KXO85) protein is ATP-dependent RNA helicase RhlB.